The chain runs to 418 residues: Mitochondrial outer membrane protein SLC25A46 (418 aa).

A phosphoserine mark is found at Ser-32 and Ser-35. Thr-45 carries the phosphothreonine modification. The disordered stretch occupies residues 46–96 (PPDIPGSRNLHWGEKSPSYGVPSAPPTLEGPAEEPFPGGGDGPRPGRSSEQ). A Solcar 1 repeat occupies 96-187 (QLNRFAGFGI…GIISEFTPLP (92 aa)). The next 6 helical transmembrane spans lie at 103-123 (FGIGLASLFTENVLAHPCIVL), 167-187 (FIVQGVTLGAEGIISEFTPLP), 202-222 (HLLLKCLTYMVAMPFYSASLI), 258-278 (LLPLFSLIFPTVLHGVLHYII), 314-334 (FPELIANFAASLCSDVILYPL), and 382-402 (VFGFYKGFGAVIIQYTLHATI). One copy of the Solcar 2 repeat lies at 311–416 (DAYFPELIAN…KIIYSTLLQN (106 aa)).

This sequence belongs to the mitochondrial carrier (TC 2.A.29) family. Associates with the mitochondrial contact site and cristae organizing system (MICOS) complex. May associate with the endoplasmic reticulum membrane protein complex (EMC). In terms of tissue distribution, widely expressed. Highly expressed in hindbrain, spinal cord and brain coronal sections containing corpus callosum, fornix, optic chiasm, thalamus, hypothalamus, midbrain, pons and cerebellum.

Its subcellular location is the mitochondrion outer membrane. Transmembrane protein of the mitochondrial outer membrane that controls mitochondrial organization. May regulate the assembly of the MICOS (mitochondrial contact site and cristae organizing system) complex which is essential to the biogenesis and dynamics of mitochondrial cristae, the inwards folds of the inner mitochondrial membrane. Through its interaction with the EMC (endoplasmic reticulum membrane protein complex), could regulate mitochondrial lipid homeostasis and thereby mitochondrial fission. This chain is Mitochondrial outer membrane protein SLC25A46, found in Rattus norvegicus (Rat).